We begin with the raw amino-acid sequence, 149 residues long: Basic phospholipase A2 homolog MitTx-beta (149 aa).

The signal sequence occupies residues 1–30 (MDKMNPAHLLVLAAVCVSLLGASSIPPQAL). Cystine bridges form between C41–C100, C55–C148, C57–C73, C72–C130, C79–C123, C89–C116, and C109–C121.

The protein belongs to the phospholipase A2 family. Group I subfamily. K49 sub-subfamily. In terms of assembly, heterodimer of an alpha (Kunitz-type) and a beta (phospholipase A2 homolog) chains; non-covalently-linked. As to expression, expressed by the venom gland.

Its subcellular location is the secreted. In terms of biological role, heterodimer: MitTx, a heteromeric complex between Kunitz- and phospholipase-A2-like proteins, potently, persistently and selectively activates rat and chicken acid-sensing ion channel ASIC1. Both alternatively spliced rat isoforms ASIC1a and ASIC1b are activated, with a higher potency for ASIC1a (EC(50)=9.4 nM) vs ASIC1b (EC(50)=23 nM). The rat ASIC3 subtype is also sensitive to the heterodimer, but with a lower potency (EC(50)=830 nM). On rat ASIC2a, the toxin shows a very weak activation, but produces a remarkable potentiation (&gt;100-fold) of protons when the extracellular pH drops below neutrality. Moderate and weak activations are also observed on the heterotrimers Asic1a-Asic2a and Asic1a-Asic3 (expressed in CHO cells), respectively. The binding sites of the beta subunit of MitTx and the spider psalmotoxin-1 toxin overlap, explaining why these toxins are mutually exclusive. In vivo, the heterodimer elicits robust pain-related behavior in mice by activation of ASIC1 channels on capsaicin-sensitive nerve fibers. Monomer: does not have phospholipase A2 activity but may maintain some lipid-binding character from its PLA2 lineage, which could aid in effecting neuronal depolarization. The protein is Basic phospholipase A2 homolog MitTx-beta of Micrurus tener tener (Texas coral snake).